Reading from the N-terminus, the 263-residue chain is 4-hydroxy-tetrahydrodipicolinate reductase (263 aa).

NAD(+) is bound by residues 7–12 (GFKGRM), 96–98 (GTT), and 122–125 (APNF). H152 serves as the catalytic Proton donor/acceptor. H153 lines the (S)-2,3,4,5-tetrahydrodipicolinate pocket. Catalysis depends on K156, which acts as the Proton donor. 162 to 163 (GT) contacts (S)-2,3,4,5-tetrahydrodipicolinate.

This sequence belongs to the DapB family.

The protein localises to the cytoplasm. The enzyme catalyses (S)-2,3,4,5-tetrahydrodipicolinate + NAD(+) + H2O = (2S,4S)-4-hydroxy-2,3,4,5-tetrahydrodipicolinate + NADH + H(+). It carries out the reaction (S)-2,3,4,5-tetrahydrodipicolinate + NADP(+) + H2O = (2S,4S)-4-hydroxy-2,3,4,5-tetrahydrodipicolinate + NADPH + H(+). Its pathway is amino-acid biosynthesis; L-lysine biosynthesis via DAP pathway; (S)-tetrahydrodipicolinate from L-aspartate: step 4/4. Functionally, catalyzes the conversion of 4-hydroxy-tetrahydrodipicolinate (HTPA) to tetrahydrodipicolinate. This chain is 4-hydroxy-tetrahydrodipicolinate reductase, found in Listeria monocytogenes serotype 4b (strain CLIP80459).